A 109-amino-acid chain; its full sequence is Homeobox protein E60 (109 aa).

Residues 1-31 (PRTRRVKRSDGRGNGGTPEEKRPRTAFSGEQ) form a disordered region. Residues 20–79 (EKRPRTAFSGEQLARLKREFAENRYLTERRRQQLSRDLGLNEAQIKIWFQNKRAKIKKAS) constitute a DNA-binding region (homeobox).

It belongs to the engrailed homeobox family.

It is found in the nucleus. In Apis mellifera (Honeybee), this protein is Homeobox protein E60.